The primary structure comprises 655 residues: Probable replication factor A 73 kDa subunit (655 aa).

The disordered stretch occupies residues 195–217 (NRAAAPEATRARAVPPPARRTAS). A compositionally biased stretch (low complexity) spans 196–207 (RAAAPEATRARA). Residues 236-326 (FKIHGMVSRK…TLRSDSIIEA (91 aa)) constitute a DNA-binding region (OB). The segment at 518-539 (CASEGCQKKLVGENGDYRCEKC) adopts a C4-type zinc-finger fold.

The protein belongs to the replication factor A protein 1 family. Component of the heterotrimeric canonical replication protein A complex (RPA).

It is found in the nucleus. Functionally, as part of the heterotrimeric replication protein A complex (RPA/RP-A), binds and stabilizes single-stranded DNA intermediates, that form during DNA replication or upon DNA stress. It prevents their reannealing and in parallel, recruits and activates different proteins and complexes involved in DNA metabolism. Thereby, it plays an essential role both in DNA replication and the cellular response to DNA damage. In Caenorhabditis elegans, this protein is Probable replication factor A 73 kDa subunit.